Consider the following 131-residue polypeptide: Small ribosomal subunit protein uS8 (131 aa).

Belongs to the universal ribosomal protein uS8 family. Part of the 30S ribosomal subunit. Contacts proteins S5 and S12.

Functionally, one of the primary rRNA binding proteins, it binds directly to 16S rRNA central domain where it helps coordinate assembly of the platform of the 30S subunit. The polypeptide is Small ribosomal subunit protein uS8 (Halorhodospira halophila (strain DSM 244 / SL1) (Ectothiorhodospira halophila (strain DSM 244 / SL1))).